The chain runs to 691 residues: Kinetochore protein NDC80 (691 aa).

A disordered region spans residues 1–95; that stretch reads MQSSTSTDQH…LNDKSNSRNS (95 aa). Over residues 10-19 the composition is skewed to basic and acidic residues; the sequence is HVLHHMDPHR. A compositionally biased stretch (polar residues) spans 20–42; it reads FTSQIPTATSSQLRRRNSTNQGL. Residue Thr-38 is modified to Phosphothreonine. Positions 54 to 65 are enriched in low complexity; it reads TISGTGIPTGGI. At Thr-248 the chain carries Phosphothreonine. Coiled coils occupy residues 376 to 446 and 522 to 686; these read GKLE…SIKS and KKSI…FETE.

Belongs to the NDC80/HEC1 family. Component of the NDC80 complex, which consists of NDC80, NUF2, SPC24 and SPC25. The NDC80 complex is formed by two subcomplexes, NDC80-NUF2 and SPC24-SPC25, which are joined end-to-end through their coiled-coil domains. It has a rod-like structure with a length of 570 Angstroms and globular domains at either end. The NDC80-NUF2 globular domains are probably directed to microtubules, the SPC24-SPC25 globular domains to the centromere. NDC80 probably interacts with SMC1 and SMC2. Also interacts with KIN3. Interacts with DMC1.

It localises to the nucleus. The protein resides in the chromosome. Its subcellular location is the centromere. It is found in the kinetochore. Acts as a component of the essential kinetochore-associated NDC80 complex, which is involved in chromosome segregation and spindle checkpoint activity. This Saccharomyces cerevisiae (strain ATCC 204508 / S288c) (Baker's yeast) protein is Kinetochore protein NDC80.